The sequence spans 961 residues: Outer capsid protein VP2 (961 aa).

It belongs to the orbivirus VP2 family.

It is found in the virion. Its function is as follows. The VP2 protein is one of the two proteins (with VP5) which constitute the virus particle outer capsid. It is the major target of the host immunogenic response. Responsible for viral attachment to target host cell, probably by binding to sialic acid. This attachment induces virion internalization predominantly through clathrin-dependent endocytosis. The sequence is that of Outer capsid protein VP2 (Segment-2) from Antilocapra americana (Pronghorn).